The following is a 241-amino-acid chain: 2,3,4,5-tetrahydropyridine-2,6-dicarboxylate N-acetyltransferase (241 aa).

Belongs to the transferase hexapeptide repeat family. DapH subfamily.

The enzyme catalyses (S)-2,3,4,5-tetrahydrodipicolinate + acetyl-CoA + H2O = L-2-acetamido-6-oxoheptanedioate + CoA. Its pathway is amino-acid biosynthesis; L-lysine biosynthesis via DAP pathway; LL-2,6-diaminopimelate from (S)-tetrahydrodipicolinate (acetylase route): step 1/3. Functionally, catalyzes the transfer of an acetyl group from acetyl-CoA to tetrahydrodipicolinate. The polypeptide is 2,3,4,5-tetrahydropyridine-2,6-dicarboxylate N-acetyltransferase (Thermoanaerobacter sp. (strain X514)).